Consider the following 437-residue polypeptide: Sodium/bile acid cotransporter 4 (437 aa).

Over 1-103 the chain is Extracellular; sequence MDSLDNTTLL…PPFWDTPLNH (103 aa). N-linked (GlcNAc...) asparagine glycans are attached at residues Asn6 and Asn20. Residues 15–79 form a disordered region; the sequence is SLLPDNLTLS…SSSLTVGVAG (65 aa). The span at 22–41 shows a compositional bias: polar residues; that stretch reads TLSPNAGSPSASTLSPLAVT. Residues 42–74 are compositionally biased toward low complexity; that stretch reads SSPGPGLSLAPSPSIGFSPEATPTPEPTSSSLT. A helical membrane pass occupies residues 104 to 124; the sequence is GLNVFVGAALCITMLGLGCTV. Residues 125 to 140 lie on the Cytoplasmic side of the membrane; that stretch reads DVNHFGAHVRRPVGAL. Residues 141 to 161 traverse the membrane as a helical segment; sequence LAALCQFGFLPLLAFLLALIF. Residues 162–197 are Extracellular-facing; sequence KLDEVAAVAVLLCGCCPGGNLSNLMSLLVDGDMNLS. N-linked (GlcNAc...) asparagine glycans are attached at residues Asn181 and Asn195. Residues 198 to 218 form a helical membrane-spanning segment; the sequence is IIMTISSTLLALVLMPLCLWI. Residues 219 to 233 lie on the Cytoplasmic side of the membrane; the sequence is YSRAWINTPLVQLLP. The chain crosses the membrane as a helical span at residues 234-254; it reads LGAVTLTLCSTLIPIGLGVFI. The Extracellular portion of the chain corresponds to 255 to 267; sequence RYKYNRVADYIVK. Residues 268–288 traverse the membrane as a helical segment; that stretch reads VSLWSLLVTLVVLFIMTGTML. The Cytoplasmic portion of the chain corresponds to 289–291; the sequence is GPE. The helical transmembrane segment at 292–312 threads the bilayer; sequence LLASIPATVYVVAIFMPLAGY. At 313-360 the chain is on the extracellular side; the sequence is ASGYGLATLFHLPPNCKRTVCLETGSQNVQLCTAILKLAFPPRFIGSM. A helical membrane pass occupies residues 361 to 381; that stretch reads YMFPLLYALFQSAEAGVFVLI. At 382 to 437 the chain is on the cytoplasmic side; sequence YKMYGSEILHKREALDEDEDTDISYKKLKEEEMADTSYGTVGTDDLVMMETTQTAL.

The protein belongs to the bile acid:sodium symporter (BASS) (TC 2.A.28) family. Activated following N-terminal proteolytic cleavage by thrombin and/or proteases. Highest expression in the brain and significantly above background levels in the eye, prostate, and whole embryo tissue preparations.

Its subcellular location is the cell membrane. Functionally, transporter for bile acids. The sequence is that of Sodium/bile acid cotransporter 4 (Slc10a4) from Mus musculus (Mouse).